The primary structure comprises 984 residues: Pro-apoptotic serine protease NMA111 (984 aa).

Positions 51 to 241 (VVSIQFAQVA…LPLNRGKRAL (191 aa)) are serine protease. Active-site charge relay system residues include His-89, Asp-120, and Ser-203. 2 consecutive PDZ domains span residues 268 to 346 (RRLG…ERNG) and 756 to 826 (PEWI…VRNK).

Belongs to the peptidase S1C family.

The protein resides in the nucleus. Its function is as follows. Nuclear serine protease which mediates apoptosis. The polypeptide is Pro-apoptotic serine protease NMA111 (NMA111) (Yarrowia lipolytica (strain CLIB 122 / E 150) (Yeast)).